The sequence spans 173 residues: Ribulose bisphosphate carboxylase small subunit, chloroplastic 1 (173 aa).

The transit peptide at 1-49 (MASIPATVATVAQANMVAPFTGLKANAAFPVTKKVNDFSTLPSNGGRVQ) directs the protein to the chloroplast.

The protein belongs to the RuBisCO small chain family. In terms of assembly, heterohexadecamer of 8 large and 8 small subunits.

Its subcellular location is the plastid. It localises to the chloroplast. In terms of biological role, ruBisCO catalyzes two reactions: the carboxylation of D-ribulose 1,5-bisphosphate, the primary event in carbon dioxide fixation, as well as the oxidative fragmentation of the pentose substrate. Both reactions occur simultaneously and in competition at the same active site. Although the small subunit is not catalytic it is essential for maximal activity. The protein is Ribulose bisphosphate carboxylase small subunit, chloroplastic 1 of Flaveria pringlei.